Consider the following 130-residue polypeptide: Small ribosomal subunit protein uS11 (130 aa).

This sequence belongs to the universal ribosomal protein uS11 family. Part of the 30S ribosomal subunit. Interacts with proteins S7 and S18. Binds to IF-3.

Functionally, located on the platform of the 30S subunit, it bridges several disparate RNA helices of the 16S rRNA. Forms part of the Shine-Dalgarno cleft in the 70S ribosome. The polypeptide is Small ribosomal subunit protein uS11 (Caldanaerobacter subterraneus subsp. tengcongensis (strain DSM 15242 / JCM 11007 / NBRC 100824 / MB4) (Thermoanaerobacter tengcongensis)).